The following is a 232-amino-acid chain: MAKKGKKYVEAAKLVDRAKAYDVAEAVALTKKTNTAKFDATVEVAFRLGVDPRKNDQQIRGAVVLPNGTGKTQRVLVFAKGEKAKEAEAAGADYVGDSDYIAKIQQGWFEFDVIVATPDMMGEVGKIGRVLGPKGLMPNPKTGTVTFEVEKAIGEIKAGKVEYRVDKAGNIHVPIGKVSFEDEKLVENFTTMYDTILKAKPAAAKGVYVKNVAVTSTMGPGVKVDASTFNVK.

It belongs to the universal ribosomal protein uL1 family. Part of the 50S ribosomal subunit.

Functionally, binds directly to 23S rRNA. The L1 stalk is quite mobile in the ribosome, and is involved in E site tRNA release. In terms of biological role, protein L1 is also a translational repressor protein, it controls the translation of the L11 operon by binding to its mRNA. This is Large ribosomal subunit protein uL1 from Bacillus velezensis (strain DSM 23117 / BGSC 10A6 / LMG 26770 / FZB42) (Bacillus amyloliquefaciens subsp. plantarum).